Here is a 126-residue protein sequence, read N- to C-terminus: Fluoride-specific ion channel FluC (126 aa).

Helical transmembrane passes span 5–25, 37–57, 65–85, and 101–121; these read ILVAAGGAIGASLRYLLGAGV, VAIMMANVLGSIAMGFFVVWA, LSPFVMTGVLGGFTTFSAFSL, and LYVALSVGLSVFGLMAGLWVA. The Na(+) site is built by Gly75 and Thr78.

The protein belongs to the fluoride channel Fluc/FEX (TC 1.A.43) family.

The protein localises to the cell inner membrane. The enzyme catalyses fluoride(in) = fluoride(out). With respect to regulation, na(+) is not transported, but it plays an essential structural role and its presence is essential for fluoride channel function. Fluoride-specific ion channel. Important for reducing fluoride concentration in the cell, thus reducing its toxicity. This Roseobacter denitrificans (strain ATCC 33942 / OCh 114) (Erythrobacter sp. (strain OCh 114)) protein is Fluoride-specific ion channel FluC.